The sequence spans 261 residues: Small ribosomal subunit protein uS2 (261 aa).

It belongs to the universal ribosomal protein uS2 family.

The polypeptide is Small ribosomal subunit protein uS2 (Rhodospirillum centenum (strain ATCC 51521 / SW)).